The primary structure comprises 110 residues: METSAVLRSVRLSAQKGRLVADQIRGLQVERAIRLLTFSPKKGASIILKLLESAVANAEHNEGADIDELKISQIFIGQGATLKRVSPRAKGRGNRISKPTCNIFLTVSNK.

Belongs to the universal ribosomal protein uL22 family. In terms of assembly, part of the 50S ribosomal subunit.

Its function is as follows. This protein binds specifically to 23S rRNA; its binding is stimulated by other ribosomal proteins, e.g. L4, L17, and L20. It is important during the early stages of 50S assembly. It makes multiple contacts with different domains of the 23S rRNA in the assembled 50S subunit and ribosome. The globular domain of the protein is located near the polypeptide exit tunnel on the outside of the subunit, while an extended beta-hairpin is found that lines the wall of the exit tunnel in the center of the 70S ribosome. The chain is Large ribosomal subunit protein uL22 from Nitrosomonas europaea (strain ATCC 19718 / CIP 103999 / KCTC 2705 / NBRC 14298).